Reading from the N-terminus, the 229-residue chain is Potassium/proton antiporter CemA (229 aa).

The next 3 membrane-spanning stretches (helical) occupy residues 7 to 27 (LTPF…SLSF), 106 to 126 (IVLH…YYFL), and 189 to 209 (IISG…KYWI).

It belongs to the CemA family.

The protein resides in the plastid. It localises to the chloroplast inner membrane. It catalyses the reaction K(+)(in) + H(+)(out) = K(+)(out) + H(+)(in). Functionally, contributes to K(+)/H(+) antiport activity by supporting proton efflux to control proton extrusion and homeostasis in chloroplasts in a light-dependent manner to modulate photosynthesis. Prevents excessive induction of non-photochemical quenching (NPQ) under continuous-light conditions. Indirectly promotes efficient inorganic carbon uptake into chloroplasts. The sequence is that of Potassium/proton antiporter CemA from Calycanthus floridus var. glaucus (Eastern sweetshrub).